The chain runs to 291 residues: uncharacterized protein (291 aa).

10 helical membrane passes run 5–23 (ILLSLSASVLFGYLYYFST), 33–52 (IFGFRIIFTLPFVIAAVFLF), 69–91 (PLLIFGFLFNSAMMGIQIWLFLW), 101–120 (VSFGYLLLPLTMVLVGRLVF), 127–144 (VKFLAVVIAAIGVFSNIL), 148–165 (GLSWEALLVSFGYSTYFA), 172–194 (INDLAGFCLEMSLLLPVCIYFAW), 209–228 (LLLLVLLGLISGVALNTYIV), 235–257 (INVLGLLGYAEPIMMLFVSFLIG), and 262–284 (SETIPLFICLMISMILFMSEGLV).

Belongs to the EamA transporter family.

Its subcellular location is the cell membrane. This is an uncharacterized protein from Pasteurella multocida (strain Pm70).